A 219-amino-acid chain; its full sequence is Claudin-6 (219 aa).

The Cytoplasmic segment spans residues 1 to 7 (MASTGLQ). A helical membrane pass occupies residues 8-28 (ILGIVLTLLGWVNALVSCALP). At 29-81 (MWKVTAFIGNSIVVAQMVWEGLWMSCVVQSTGQMQCKVYDSLLALPQDLQAAR) the chain is on the extracellular side. A helical membrane pass occupies residues 82–102 (ALCVVTLLIVLLGLLVYLAGA). The Cytoplasmic portion of the chain corresponds to 103–116 (KCTTCVEDRNSKSR). The helical transmembrane segment at 117–137 (LVLISGIIFVISGVLTLIPVC) threads the bilayer. Topologically, residues 138–163 (WTAHSIIQDFYNPLVADAQKRELGAS) are extracellular. The chain crosses the membrane as a helical span at residues 164–184 (LYLGWAASGLLLLGGGLLCCA). Over 185-219 (CSSGGTQGPRHYMACYSTSVPHSRGPSEYPTKNYV) the chain is Cytoplasmic. S201, S203, S207, and S211 each carry phosphoserine. The interval 218–219 (YV) is interactions with TJP1, TJP2 and TJP3.

Belongs to the claudin family. Directly interacts with TJP1/ZO-1, TJP2/ZO-2 and TJP3/ZO-3. Interacts with CLDN1, CD81 and OCLN. In terms of tissue distribution, expressed mostly in embryonic tissues.

The protein localises to the cell junction. It localises to the tight junction. It is found in the cell membrane. Plays a major role in tight junction-specific obliteration of the intercellular space, through calcium-independent cell-adhesion activity. This is Claudin-6 (Cldn6) from Mus musculus (Mouse).